Here is a 45-residue protein sequence, read N- to C-terminus: Photosystem II reaction center protein K (45 aa).

The propeptide occupies 1–8; that stretch reads MEAVFLLA. Residues 24–44 traverse the membrane as a helical segment; it reads LPVIPVFFLALAFVWQAAVGF.

This sequence belongs to the PsbK family. As to quaternary structure, PSII is composed of 1 copy each of membrane proteins PsbA, PsbB, PsbC, PsbD, PsbE, PsbF, PsbH, PsbI, PsbJ, PsbK, PsbL, PsbM, PsbT, PsbX, PsbY, PsbZ, Psb30/Ycf12, peripheral proteins PsbO, CyanoQ (PsbQ), PsbU, PsbV and a large number of cofactors. It forms dimeric complexes.

It localises to the cellular thylakoid membrane. In terms of biological role, one of the components of the core complex of photosystem II (PSII). PSII is a light-driven water:plastoquinone oxidoreductase that uses light energy to abstract electrons from H(2)O, generating O(2) and a proton gradient subsequently used for ATP formation. It consists of a core antenna complex that captures photons, and an electron transfer chain that converts photonic excitation into a charge separation. The polypeptide is Photosystem II reaction center protein K (Crocosphaera subtropica (strain ATCC 51142 / BH68) (Cyanothece sp. (strain ATCC 51142))).